The chain runs to 297 residues: GTP cyclohydrolase FolE2 (297 aa).

Belongs to the GTP cyclohydrolase IV family.

It catalyses the reaction GTP + H2O = 7,8-dihydroneopterin 3'-triphosphate + formate + H(+). It functions in the pathway cofactor biosynthesis; 7,8-dihydroneopterin triphosphate biosynthesis; 7,8-dihydroneopterin triphosphate from GTP: step 1/1. Its function is as follows. Converts GTP to 7,8-dihydroneopterin triphosphate. This chain is GTP cyclohydrolase FolE2, found in Pseudomonas fluorescens (strain ATCC BAA-477 / NRRL B-23932 / Pf-5).